A 693-amino-acid chain; its full sequence is Glycine--tRNA ligase beta subunit (693 aa).

The protein belongs to the class-II aminoacyl-tRNA synthetase family. Tetramer of two alpha and two beta subunits.

It localises to the cytoplasm. It catalyses the reaction tRNA(Gly) + glycine + ATP = glycyl-tRNA(Gly) + AMP + diphosphate. In Halalkalibacterium halodurans (strain ATCC BAA-125 / DSM 18197 / FERM 7344 / JCM 9153 / C-125) (Bacillus halodurans), this protein is Glycine--tRNA ligase beta subunit (glyS).